A 145-amino-acid chain; its full sequence is CBS domain-containing protein DDB_G0289609 (145 aa).

2 CBS domains span residues 9–66 (MSKS…FLPE) and 84–141 (MKQN…LEPV).

In Dictyostelium discoideum (Social amoeba), this protein is CBS domain-containing protein DDB_G0289609.